The chain runs to 866 residues: DNA mismatch repair protein MutS (866 aa).

613–620 (GPNMGGKS) serves as a coordination point for ATP.

It belongs to the DNA mismatch repair MutS family.

Its function is as follows. This protein is involved in the repair of mismatches in DNA. It is possible that it carries out the mismatch recognition step. This protein has a weak ATPase activity. This Haemophilus ducreyi (strain 35000HP / ATCC 700724) protein is DNA mismatch repair protein MutS.